A 255-amino-acid chain; its full sequence is 3-oxoacyl-[acyl-carrier-protein] reductase MabA (255 aa).

NADP(+) contacts are provided by residues 32-35 (NRGI), Arg-55, 69-70 (DV), Gly-98, Tyr-161, Lys-165, Ile-194, and Arg-205. Catalysis depends on Tyr-161, which acts as the Proton acceptor.

This sequence belongs to the short-chain dehydrogenases/reductases (SDR) family. Homotetramer.

The protein localises to the secreted. It localises to the cell wall. It catalyses the reaction a (3R)-hydroxyacyl-[ACP] + NADP(+) = a 3-oxoacyl-[ACP] + NADPH + H(+). The enzyme catalyses a (3R)-3-hydroxyacyl-CoA + NADP(+) = a 3-oxoacyl-CoA + NADPH + H(+). The catalysed reaction is (3R)-3-hydroxybutanoyl-CoA + NADP(+) = acetoacetyl-CoA + NADPH + H(+). It carries out the reaction (3R)-hydroxyoctanoyl-CoA + NADP(+) = 3-oxooctanoyl-CoA + NADPH + H(+). It participates in lipid metabolism; mycolic acid biosynthesis. In terms of biological role, part of the mycobacterial fatty acid elongation system FAS-II, which is involved in mycolic acid biosynthesis. Catalyzes the NADPH-dependent reduction of beta-ketoacyl derivatives, the second step of the FAS-II elongation cycle. Has a preference for longer substrates. Can use CoA derivatives as substrates in vitro. The protein is 3-oxoacyl-[acyl-carrier-protein] reductase MabA of Mycolicibacterium smegmatis (strain ATCC 700084 / mc(2)155) (Mycobacterium smegmatis).